Reading from the N-terminus, the 707-residue chain is Polyribonucleotide nucleotidyltransferase (707 aa).

Mg(2+)-binding residues include D488 and D494. Positions 554–613 constitute a KH domain; the sequence is PRLFTMKINQDKIREVIGKGGETIRSITAETGTEINIAEDGTITIAATTQEAGDAAKKRI. Positions 623–693 constitute an S1 motif domain; that stretch reads GKVYEGTVVK…DRGRVRLSIK (71 aa).

Belongs to the polyribonucleotide nucleotidyltransferase family. The cofactor is Mg(2+).

The protein resides in the cytoplasm. The catalysed reaction is RNA(n+1) + phosphate = RNA(n) + a ribonucleoside 5'-diphosphate. Its function is as follows. Involved in mRNA degradation. Catalyzes the phosphorolysis of single-stranded polyribonucleotides processively in the 3'- to 5'-direction. This is Polyribonucleotide nucleotidyltransferase from Neisseria meningitidis serogroup B (strain ATCC BAA-335 / MC58).